The primary structure comprises 352 residues: tRNA pseudouridine synthase D (352 aa).

Asp81 acts as the Nucleophile in catalysis. A TRUD domain is found at 157 to 303 (GIPNYFGAQR…MSHERRILRL (147 aa)).

The protein belongs to the pseudouridine synthase TruD family.

The enzyme catalyses uridine(13) in tRNA = pseudouridine(13) in tRNA. Responsible for synthesis of pseudouridine from uracil-13 in transfer RNAs. This is tRNA pseudouridine synthase D from Pseudomonas fluorescens (strain Pf0-1).